The sequence spans 231 residues: Histidine biosynthesis bifunctional protein HisIE (231 aa).

Positions 1–130 are phosphoribosyl-AMP cyclohydrolase; it reads MQDVFRQIDW…QKYPIGVYHI (130 aa). The segment at 131–231 is phosphoribosyl-ATP pyrophosphohydrolase; the sequence is LDDLYHIIEQ…GIEEKASRKH (101 aa).

This sequence in the N-terminal section; belongs to the PRA-CH family. In the C-terminal section; belongs to the PRA-PH family.

Its subcellular location is the cytoplasm. It carries out the reaction 1-(5-phospho-beta-D-ribosyl)-ATP + H2O = 1-(5-phospho-beta-D-ribosyl)-5'-AMP + diphosphate + H(+). The enzyme catalyses 1-(5-phospho-beta-D-ribosyl)-5'-AMP + H2O = 1-(5-phospho-beta-D-ribosyl)-5-[(5-phospho-beta-D-ribosylamino)methylideneamino]imidazole-4-carboxamide. Its pathway is amino-acid biosynthesis; L-histidine biosynthesis; L-histidine from 5-phospho-alpha-D-ribose 1-diphosphate: step 2/9. The protein operates within amino-acid biosynthesis; L-histidine biosynthesis; L-histidine from 5-phospho-alpha-D-ribose 1-diphosphate: step 3/9. In Helicobacter hepaticus (strain ATCC 51449 / 3B1), this protein is Histidine biosynthesis bifunctional protein HisIE.